The sequence spans 320 residues: MDDSSFMDLMIDTDEYLIDDWESDFPICGETNTNPGSESGSGTGFELLAERPTKQMKTNNNMNSTSSSPSSSSSSGSRTSQVISFGSPDTKTNPVETSLNFSNQVSMDQKVGSKRKDCVNNGGRREPHLLKEHVLAERKRRQKLNERLIALSALLPGLKKTDKATVLEDAIKHLKQLQERVKKLEEERVVTKKMDQSIILVKRSQVYLDDDSSSYSSTCSAASPLSSSSDEVSIFKQTMPMIEARVSDRDLLIRVHCEKNKGCMIKILSSLEKFRLEVVNSFTLPFGNSTLVITILTKMDNKFSRPVEEVVKNIRVALAE.

The interval 53 to 105 is disordered; sequence TKQMKTNNNMNSTSSSPSSSSSSGSRTSQVISFGSPDTKTNPVETSLNFSNQV. Residues 58-80 show a composition bias toward low complexity; the sequence is TNNNMNSTSSSPSSSSSSGSRTS. The segment covering 81-105 has biased composition (polar residues); sequence QVISFGSPDTKTNPVETSLNFSNQV. Positions 128 to 177 constitute a bHLH domain; sequence HLLKEHVLAERKRRQKLNERLIALSALLPGLKKTDKATVLEDAIKHLKQL.

Homodimer. As to expression, expressed constitutively in roots, leaves, stems, and flowers.

The protein localises to the nucleus. In terms of biological role, transcription activator that regulates the expression of at least NAI2, PYK10 and PBP1. Required for and mediates the formation of endoplasmic reticulum bodies (ER bodies). Involved in the symbiotic interactions with the endophytes of the Sebacinaceae fungus family, such as Piriformospora indica and Sebacina. The protein is Transcription factor NAI1 (NAI1) of Arabidopsis thaliana (Mouse-ear cress).